Here is a 311-residue protein sequence, read N- to C-terminus: Giardin subunit gamma (311 aa).

A coiled-coil region spans residues 185 to 233; that stretch reads GLQTEINSLEAIIEREFAQAANRLNQEVSNFKESFDASERNIKLQKKHV.

In terms of assembly, interacts with EB1.

The protein localises to the cytoplasm. It localises to the cytoskeleton. Functionally, giardins are involved in parasite attachment to the intestinal mucosa and in the cytoskeletal disassembly and reassembly that marks the transition from infectious trophozoite to transmissible cyst. They may interact with other cytoskeletal proteins such as microtubules in the microribbons or crossbridges, to maintain the integrity of the ventral disk. Involved in formation of the ventral disk. This chain is Giardin subunit gamma, found in Giardia intestinalis (Giardia lamblia).